The following is a 146-amino-acid chain: UPF0260 protein VP2169 (146 aa).

This sequence belongs to the UPF0260 family.

The sequence is that of UPF0260 protein VP2169 from Vibrio parahaemolyticus serotype O3:K6 (strain RIMD 2210633).